The following is a 120-amino-acid chain: Ig heavy chain V region 36-65 (120 aa).

The Ig-like domain maps to 1-111; that stretch reads VQLQQSGAEL…GGSYYFDYWG (111 aa).

In Mus musculus (Mouse), this protein is Ig heavy chain V region 36-65.